The chain runs to 316 residues: Glutathione synthetase (316 aa).

Positions 125 to 310 (KLFTAWFSDL…ITGMLMDAIE (186 aa)) constitute an ATP-grasp domain. Position 151–207 (151–207 (WEKHSDIILKPLDGMGGASIFRVKEGDPNLGVIAETLTEHGTCYCMAQNYLPAIKDG)) interacts with ATP. Positions 281 and 283 each coordinate Mg(2+).

Belongs to the prokaryotic GSH synthase family. Mg(2+) is required as a cofactor. It depends on Mn(2+) as a cofactor.

It carries out the reaction gamma-L-glutamyl-L-cysteine + glycine + ATP = glutathione + ADP + phosphate + H(+). It functions in the pathway sulfur metabolism; glutathione biosynthesis; glutathione from L-cysteine and L-glutamate: step 2/2. This chain is Glutathione synthetase, found in Shigella flexneri.